A 257-amino-acid chain; its full sequence is Imidazole glycerol phosphate synthase subunit HisF (257 aa).

Active-site residues include Asp-12 and Asp-131.

It belongs to the HisA/HisF family. In terms of assembly, heterodimer of HisH and HisF.

Its subcellular location is the cytoplasm. The enzyme catalyses 5-[(5-phospho-1-deoxy-D-ribulos-1-ylimino)methylamino]-1-(5-phospho-beta-D-ribosyl)imidazole-4-carboxamide + L-glutamine = D-erythro-1-(imidazol-4-yl)glycerol 3-phosphate + 5-amino-1-(5-phospho-beta-D-ribosyl)imidazole-4-carboxamide + L-glutamate + H(+). It participates in amino-acid biosynthesis; L-histidine biosynthesis; L-histidine from 5-phospho-alpha-D-ribose 1-diphosphate: step 5/9. IGPS catalyzes the conversion of PRFAR and glutamine to IGP, AICAR and glutamate. The HisF subunit catalyzes the cyclization activity that produces IGP and AICAR from PRFAR using the ammonia provided by the HisH subunit. The protein is Imidazole glycerol phosphate synthase subunit HisF of Cellvibrio japonicus (strain Ueda107) (Pseudomonas fluorescens subsp. cellulosa).